Reading from the N-terminus, the 378-residue chain is tRNA-specific 2-thiouridylase MnmA (378 aa).

ATP-binding positions include 9–16 and methionine 35; that span reads GVSGGVDS. The interval 94 to 96 is interaction with target base in tRNA; that stretch reads NPD. Cysteine 99 serves as the catalytic Nucleophile. Cysteines 99 and 195 form a disulfide. ATP is bound at residue glycine 123. The interaction with tRNA stretch occupies residues 145 to 147; the sequence is KDQ. Cysteine 195 serves as the catalytic Cysteine persulfide intermediate. An interaction with tRNA region spans residues 307–308; that stretch reads RY.

Belongs to the MnmA/TRMU family.

It localises to the cytoplasm. It carries out the reaction S-sulfanyl-L-cysteinyl-[protein] + uridine(34) in tRNA + AH2 + ATP = 2-thiouridine(34) in tRNA + L-cysteinyl-[protein] + A + AMP + diphosphate + H(+). Functionally, catalyzes the 2-thiolation of uridine at the wobble position (U34) of tRNA, leading to the formation of s(2)U34. This Xanthomonas oryzae pv. oryzae (strain MAFF 311018) protein is tRNA-specific 2-thiouridylase MnmA.